The following is a 398-amino-acid chain: ATP-dependent RNA helicase eIF4A (398 aa).

The Q motif signature appears at 25–53; sequence DSFDTMNLKPELLRGVYAYGFERPSAIQQ. Positions 56–226 constitute a Helicase ATP-binding domain; that stretch reads IMPVIKGHDV…TKFMRDPVRI (171 aa). 69–76 provides a ligand contact to ATP; sequence AQSGTGKT. A DEAD box motif is present at residues 174–177; the sequence is DEAD. The 162-residue stretch at 237-398 folds into the Helicase C-terminal domain; the sequence is GIKQFYIAVE…EMPMNVADLI (162 aa).

It belongs to the DEAD box helicase family. eIF4A subfamily. As to quaternary structure, component of the eIF4F complex, which composition varies with external and internal environmental conditions. It is composed of at least eIF4A, eIF4E and eIF4G.

The protein resides in the cytoplasm. The enzyme catalyses ATP + H2O = ADP + phosphate + H(+). ATP-dependent RNA helicase which is a subunit of the eIF4F complex involved in cap recognition and is required for mRNA binding to ribosome. In the current model of translation initiation, eIF4A unwinds RNA secondary structures in the 5'-UTR of mRNAs which is necessary to allow efficient binding of the small ribosomal subunit, and subsequent scanning for the initiator codon. This is ATP-dependent RNA helicase eIF4A (tif1) from Sclerotinia sclerotiorum (strain ATCC 18683 / 1980 / Ss-1) (White mold).